The sequence spans 140 residues: Cysteine desulfuration protein SufE (140 aa).

Cys-51 serves as the catalytic Cysteine persulfide intermediate.

It belongs to the SufE family. Homodimer. Interacts with SufS.

It localises to the cytoplasm. It functions in the pathway cofactor biosynthesis; iron-sulfur cluster biosynthesis. Functionally, participates in cysteine desulfuration mediated by SufS. Cysteine desulfuration mobilizes sulfur from L-cysteine to yield L-alanine and constitutes an essential step in sulfur metabolism for biosynthesis of a variety of sulfur-containing biomolecules. Functions as a sulfur acceptor for SufS, by mediating the direct transfer of the sulfur atom from the S-sulfanylcysteine of SufS, an intermediate product of cysteine desulfuration process. The sequence is that of Cysteine desulfuration protein SufE from Yersinia pestis bv. Antiqua (strain Antiqua).